A 60-amino-acid chain; its full sequence is Large ribosomal subunit protein bL32 (60 aa).

The protein belongs to the bacterial ribosomal protein bL32 family.

The sequence is that of Large ribosomal subunit protein bL32 from Borrelia turicatae (strain 91E135).